Reading from the N-terminus, the 296-residue chain is MALATGPGKQTQLREVEGVPLQAAIVDNWGQIQSFEAKPDDLLICTYPKSGTTWIQEIVDMIEQNGDVEKCQRALIQHRHPFIEWARPPQPSGVEKAQAMPSPRILRTHLPTRLLPPSFWENNCKFLYVARNVKDCMVSYYHFQRMNQVLPDPGTWEEYFETFINGKVAWGSWFEHVKGWWEVKGRYQILFLFYEDIKKDPKCEIRKVAQFMGKHLDETVLDKIVQETSFEKMKDNPMINRSTVPKSIMDQSISPFMRKGTVGDWKNHFTVAQSHRLDELYRKKMEGVSIDFCLEL.

49 to 54 is a binding site for 3'-phosphoadenylyl sulfate; it reads KSGTTW. 107-109 contributes to the substrate binding site; sequence RTH. The active-site Proton acceptor is histidine 109. 3'-phosphoadenylyl sulfate contacts are provided by residues arginine 131, serine 139, tyrosine 194, and 228–233; that span reads TSFEKM. Position 139 is a phosphoserine (serine 139). Residue serine 254 is modified to Phosphoserine. 256–260 is a 3'-phosphoadenylyl sulfate binding site; sequence FMRKG.

This sequence belongs to the sulfotransferase 1 family. Found in gastrointestinal tract tissues, liver and kidney.

Its subcellular location is the cytoplasm. It is found in the lysosome. The protein resides in the mitochondrion. The enzyme catalyses a phenol + 3'-phosphoadenylyl sulfate = an aryl sulfate + adenosine 3',5'-bisphosphate + H(+). It catalyses the reaction cholesterol + 3'-phosphoadenylyl sulfate = cholesterol sulfate + adenosine 3',5'-bisphosphate + H(+). Functionally, sulfotransferase that utilizes 3'-phospho-5'-adenylyl sulfate (PAPS) to catalyze the sulfate conjugation of phenolic compounds. Does not transfer sulfate to steroids, dopamine, acetaminophen, or alpha-naphthol. Except in mitochondria, where it can add sulfate to cholesterol producing cholesterol sulfate, which alters mitochondrial membrane organization, and impacts protein complex mobility increasing state-III respiration, thereby modulating mitochondrial respiration. Catalyzes the sulfation of the carcinogenic N-hydroxy-2-acetylaminofluorene leading to highly reactive intermediates capable of forming DNA adducts, potentially resulting in mutagenesis. This chain is Sulfotransferase 1C2 (SULT1C2), found in Oryctolagus cuniculus (Rabbit).